The chain runs to 375 residues: Platelet-derived growth factor receptor-like protein (375 aa).

Positions 1–21 (MKIWLLLGLLLMHEALEDVTG) are cleaved as a signal peptide. The disordered stretch occupies residues 20–64 (TGQHPPKNKRPKEPGENRIKPTNKKVKPKIPKIKDRDSADPTPKT). A compositionally biased stretch (basic residues) spans 40–50 (PTNKKVKPKIP). In terms of domain architecture, Ig-like C2-type 1 spans 62-159 (PKTQSIMTQM…GYVCRRDEAK (98 aa)). A disulfide bond links Cys96 and Cys143. N-linked (GlcNAc...) asparagine glycans are attached at residues Asn132 and Asn219. One can recognise an Ig-like C2-type 2 domain in the interval 272–373 (PSTTILASSN…GQTTVATTVE (102 aa)). A disulfide bridge links Cys293 with Cys357.

Forms a complex composed of PDGFRL, TNK2 and GRB2.

The protein localises to the secreted. The protein is Platelet-derived growth factor receptor-like protein (PDGFRL) of Bos taurus (Bovine).